Here is a 300-residue protein sequence, read N- to C-terminus: 33 kDa chaperonin (300 aa).

Disulfide bonds link C235–C237 and C269–C272.

This sequence belongs to the HSP33 family. In terms of processing, under oxidizing conditions two disulfide bonds are formed involving the reactive cysteines. Under reducing conditions zinc is bound to the reactive cysteines and the protein is inactive.

The protein localises to the cytoplasm. Redox regulated molecular chaperone. Protects both thermally unfolding and oxidatively damaged proteins from irreversible aggregation. Plays an important role in the bacterial defense system toward oxidative stress. The sequence is that of 33 kDa chaperonin from Pseudomonas savastanoi pv. phaseolicola (strain 1448A / Race 6) (Pseudomonas syringae pv. phaseolicola (strain 1448A / Race 6)).